The sequence spans 154 residues: CS6 fimbrial subunit A (154 aa).

The signal sequence occupies residues 1–18 (MKKTIGLILILASFGSHA).

The protein localises to the fimbrium. In terms of biological role, fimbriae (also called pili), polar filaments radiating from the surface of the bacterium to a length of 0.5-1.5 micrometers and numbering 100-300 per cell, enable bacteria to colonize the epithelium of specific host organs. This chain is CS6 fimbrial subunit A (cssA), found in Escherichia coli.